The following is a 421-amino-acid chain: Serine--tRNA ligase (421 aa).

Residue 230–232 (TAE) participates in L-serine binding. 261–263 (RRE) is a binding site for ATP. Residue Glu284 participates in L-serine binding. 348–351 (EISS) provides a ligand contact to ATP. Ser383 is an L-serine binding site.

It belongs to the class-II aminoacyl-tRNA synthetase family. Type-1 seryl-tRNA synthetase subfamily. Homodimer. The tRNA molecule binds across the dimer.

Its subcellular location is the cytoplasm. The catalysed reaction is tRNA(Ser) + L-serine + ATP = L-seryl-tRNA(Ser) + AMP + diphosphate + H(+). The enzyme catalyses tRNA(Sec) + L-serine + ATP = L-seryl-tRNA(Sec) + AMP + diphosphate + H(+). The protein operates within aminoacyl-tRNA biosynthesis; selenocysteinyl-tRNA(Sec) biosynthesis; L-seryl-tRNA(Sec) from L-serine and tRNA(Sec): step 1/1. Functionally, catalyzes the attachment of serine to tRNA(Ser). Is also able to aminoacylate tRNA(Sec) with serine, to form the misacylated tRNA L-seryl-tRNA(Sec), which will be further converted into selenocysteinyl-tRNA(Sec). This Finegoldia magna (strain ATCC 29328 / DSM 20472 / WAL 2508) (Peptostreptococcus magnus) protein is Serine--tRNA ligase.